The following is a 150-amino-acid chain: Large ribosomal subunit protein bL9 (150 aa).

Belongs to the bacterial ribosomal protein bL9 family.

Functionally, binds to the 23S rRNA. In Shewanella piezotolerans (strain WP3 / JCM 13877), this protein is Large ribosomal subunit protein bL9.